Here is a 319-residue protein sequence, read N- to C-terminus: Aspartate carbamoyltransferase catalytic subunit (319 aa).

Residues Arg-65 and Thr-66 each coordinate carbamoyl phosphate. L-aspartate is bound at residue Lys-93. Carbamoyl phosphate-binding residues include Arg-115, His-143, and Gln-146. Arg-176 and Arg-230 together coordinate L-aspartate. Carbamoyl phosphate is bound by residues Gly-271 and Pro-272.

Belongs to the aspartate/ornithine carbamoyltransferase superfamily. ATCase family. In terms of assembly, heterododecamer (2C3:3R2) of six catalytic PyrB chains organized as two trimers (C3), and six regulatory PyrI chains organized as three dimers (R2).

It catalyses the reaction carbamoyl phosphate + L-aspartate = N-carbamoyl-L-aspartate + phosphate + H(+). Its pathway is pyrimidine metabolism; UMP biosynthesis via de novo pathway; (S)-dihydroorotate from bicarbonate: step 2/3. Catalyzes the condensation of carbamoyl phosphate and aspartate to form carbamoyl aspartate and inorganic phosphate, the committed step in the de novo pyrimidine nucleotide biosynthesis pathway. The polypeptide is Aspartate carbamoyltransferase catalytic subunit (Chelativorans sp. (strain BNC1)).